The sequence spans 290 residues: ATP phosphoribosyltransferase (290 aa).

It belongs to the ATP phosphoribosyltransferase family. Long subfamily. Mg(2+) serves as cofactor.

The protein localises to the cytoplasm. It carries out the reaction 1-(5-phospho-beta-D-ribosyl)-ATP + diphosphate = 5-phospho-alpha-D-ribose 1-diphosphate + ATP. It functions in the pathway amino-acid biosynthesis; L-histidine biosynthesis; L-histidine from 5-phospho-alpha-D-ribose 1-diphosphate: step 1/9. With respect to regulation, feedback inhibited by histidine. Its function is as follows. Catalyzes the condensation of ATP and 5-phosphoribose 1-diphosphate to form N'-(5'-phosphoribosyl)-ATP (PR-ATP). Has a crucial role in the pathway because the rate of histidine biosynthesis seems to be controlled primarily by regulation of HisG enzymatic activity. The polypeptide is ATP phosphoribosyltransferase (hisG) (Saccharolobus solfataricus (strain ATCC 35092 / DSM 1617 / JCM 11322 / P2) (Sulfolobus solfataricus)).